We begin with the raw amino-acid sequence, 111 residues long: Prefoldin subunit 2 (111 aa).

Coiled-coil stretches lie at residues 1–36 (MEQRNNVFQAKYNEYKQILEELQTKIIELGHDKDEH) and 72–92 (LETKKENIEGTISKMKETLIQ).

This sequence belongs to the prefoldin subunit beta family. In terms of assembly, heterohexamer of two PFD-alpha type and four PFD-beta type subunits.

The protein resides in the cytoplasm. In terms of biological role, binds specifically to cytosolic chaperonin (c-CPN) and transfers target proteins to it. Binds to nascent polypeptide chain and promotes folding in an environment in which there are many competing pathways for nonnative proteins. This is Prefoldin subunit 2 (GIM4) from Saccharomyces cerevisiae (strain ATCC 204508 / S288c) (Baker's yeast).